The sequence spans 215 residues: Ependymin-1 (215 aa).

A signal peptide spans 1–20; sequence MHTVKLLCVVFSCLCAVAWA. N-linked (GlcNAc...) asparagine glycans are attached at residues N71 and N94.

The protein belongs to the ependymin family. Forms disulfide-linked dimers. Different glycosylation variants are known as EPD-beta and EPD-gamma. Post-translationally, binds calcium through the terminal sialic acids. In terms of tissue distribution, EPDs are synthesized in the meninx and secreted in the cerebrospinal fluid.

The protein localises to the secreted. In terms of biological role, may play a role in neural plasticity. May be involved during axon regeneration. This Carassius auratus (Goldfish) protein is Ependymin-1 (epd1).